The following is a 507-amino-acid chain: Transcription factor SOX-9 (507 aa).

Disordered regions lie at residues 1–67 (MNLL…SEED) and 160–250 (RLRV…AGKV). Low complexity predominate over residues 30-41 (SAGSPCPSGSGS). Polar residues predominate over residues 42–52 (DTENTRPQENT). Composition is skewed to basic and acidic residues over residues 56-67 (GEPDLKKESEED) and 160-174 (RLRV…DYKY). Residues 63–103 (ESEEDKFPVCIREAVSQVLKGYDWTLVPMPVRVNGSSKNKP) are dimerization (DIM). Residues 63–103 (ESEEDKFPVCIREAVSQVLKGYDWTLVPMPVRVNGSSKNKP) form a PQA region. Residue Ser64 is modified to Phosphoserine. Positions 105–173 (VKRPMNAFMV…QHKKDHPDYK (69 aa)) form a DNA-binding region, HMG box. Ser211 carries the phosphoserine modification. Residues 224-307 (PGEHSGQSQG…LPPNGHPGVP (84 aa)) form a transactivation domain (TAM) region. 2 short sequence motifs (9aaTAD) span residues 275–284 (IGELSSDVIS) and 290–298 (DVNEFDQYL). A disordered region spans residues 335–429 (WMSKQQAPPP…PFNLPHYNPS (95 aa)). The segment covering 341 to 369 (APPPPPQQPPQAPQAPQAPPQQQAPPQPQ) has biased composition (pro residues). Residues 378–420 (HTLTTLSSEPGQSQRTHIKTEQLSPSHYSEQQQHSPQQISYSP) are compositionally biased toward polar residues. Residues 392–507 (RTHIKTEQLS…QPVYTQLTRP (116 aa)) are transactivation domain (TAC). Lys396 is covalently cross-linked (Glycyl lysine isopeptide (Lys-Gly) (interchain with G-Cter in ubiquitin)). The 9aaTAD 3 motif lies at 458–466 (SGLYSTFTY). Residues 477-507 (PIADTSGVPSIPQTHSPQHWEQPVYTQLTRP) are disordered. A compositionally biased stretch (polar residues) spans 483–507 (GVPSIPQTHSPQHWEQPVYTQLTRP).

Homodimer; homodimerization is required for activity. Interacts (via C-terminus) with ZNF219; forming a complex that binds to the COL2A1 promoter and activates COL2A1 expression. Interacts with DDRGK1. Interacts with EP300/p300. Interacts with beta-catenin (CTNNB1); inhibiting CTNNB1 activity by competing with the binding sites of TCF/LEF within CTNNB1. Acetylated; acetylation impairs nuclear localization and ability to transactivate expression of target genes. Deacetylated by SIRT1. In terms of processing, phosphorylation at Ser-64 and Ser-211 by PKA increases transcriptional activity and may help delay chondrocyte maturation downstream of PTHLH/PTHrP signaling. Phosphorylation at either Ser-64 or Ser-211 is required for sumoylation, but phosphorylation is not dependent on sumoylation. Phosphorylated on tyrosine residues; tyrosine dephosphorylation by PTPN11/SHP2 blocks SOX9 phosphorylation by PKA and subsequent SUMOylation. Post-translationally, sumoylated; phosphorylation at either Ser-64 or Ser-211 is required for sumoylation. Sumoylation is induced by BMP signaling pathway. Ubiquitinated; ubiquitination leads to proteasomal degradation and is negatively regulated by DDRGK1.

The protein resides in the nucleus. Transcription factor that plays a key role in chondrocytes differentiation and skeletal development. Specifically binds the 5'-ACAAAG-3' DNA motif present in enhancers and super-enhancers and promotes expression of genes important for chondrogenesis, including cartilage matrix protein-coding genes COL2A1, COL4A2, COL9A1, COL11A2 and ACAN, SOX5 and SOX6. Also binds to some promoter regions. Plays a central role in successive steps of chondrocyte differentiation. Absolutely required for precartilaginous condensation, the first step in chondrogenesis during which skeletal progenitors differentiate into prechondrocytes. Together with SOX5 and SOX6, required for overt chondrogenesis when condensed prechondrocytes differentiate into early stage chondrocytes, the second step in chondrogenesis. Later, required to direct hypertrophic maturation and block osteoblast differentiation of growth plate chondrocytes: maintains chondrocyte columnar proliferation, delays prehypertrophy and then prevents osteoblastic differentiation of chondrocytes by lowering beta-catenin (CTNNB1) signaling and RUNX2 expression. Also required for chondrocyte hypertrophy, both indirectly, by keeping the lineage fate of chondrocytes, and directly, by remaining present in upper hypertrophic cells and transactivating COL10A1 along with MEF2C. Low lipid levels are the main nutritional determinant for chondrogenic commitment of skeletal progenitor cells: when lipids levels are low, FOXO (FOXO1 and FOXO3) transcription factors promote expression of SOX9, which induces chondrogenic commitment and suppresses fatty acid oxidation. Mechanistically, helps, but is not required, to remove epigenetic signatures of transcriptional repression and deposit active promoter and enhancer marks at chondrocyte-specific genes. Acts in cooperation with the Hedgehog pathway-dependent GLI (GLI1 and GLI3) transcription factors. In addition to cartilage development, also acts as a regulator of proliferation and differentiation in epithelial stem/progenitor cells: involved in the lung epithelium during branching morphogenesis, by balancing proliferation and differentiation and regulating the extracellular matrix. Controls epithelial branching during kidney development. The protein is Transcription factor SOX-9 of Rattus norvegicus (Rat).